A 715-amino-acid polypeptide reads, in one-letter code: Eosinophil peroxidase (715 aa).

The N-terminal stretch at 1 to 17 is a signal peptide; it reads MHLLPALAGVLATLVLA. Positions 18-139 are excised as a propeptide; the sequence is QPCEGTDPAS…SGCALRDQAE (122 aa). Residues Asn52 and Asn113 are each glycosylated (N-linked (GlcNAc...) asparagine). Cys141 and Cys152 are oxidised to a cystine. Asp232 contributes to the heme b binding site. His233 functions as the Proton acceptor in the catalytic mechanism. Asp234 contacts Ca(2+). 2 disulfide bridges follow: Cys253–Cys263 and Cys257–Cys281. Thr306, Phe308, Asp310, and Ser312 together coordinate Ca(2+). N-linked (GlcNAc...) asparagine glycans are attached at residues Asn327 and Asn363. A disulfide bond links Cys359 and Cys370. Heme b-binding residues include Glu380 and His474. At Tyr488 the chain carries 3'-nitrotyrosine. 2 cysteine pairs are disulfide-bonded: Cys578/Cys635 and Cys676/Cys701. Asn700 and Asn708 each carry an N-linked (GlcNAc...) asparagine glycan.

Belongs to the peroxidase family. XPO subfamily. Tetramer of two light chains and two heavy chains. Ca(2+) is required as a cofactor. Heme b serves as cofactor.

It is found in the cytoplasmic granule. It carries out the reaction 2 a phenolic donor + H2O2 = 2 a phenolic radical donor + 2 H2O. Functionally, mediates tyrosine nitration of secondary granule proteins in mature resting eosinophils. Shows significant inhibitory activity towards Mycobacterium tuberculosis H37Rv by inducing bacterial fragmentation and lysis. This chain is Eosinophil peroxidase (EPX), found in Homo sapiens (Human).